The primary structure comprises 556 residues: Glutamine--tRNA ligase (556 aa).

The 'HIGH' region signature appears at 35–45 (PEPNGYLHIGH). ATP is bound by residues 36–38 (EPN) and 42–48 (HIGHAKS). L-glutamine-binding residues include aspartate 68 and tyrosine 213. ATP contacts are provided by residues threonine 232 and 262–263 (RL). The short motif at 269 to 273 (VTSKR) is the 'KMSKS' region element.

The protein belongs to the class-I aminoacyl-tRNA synthetase family. Monomer.

It localises to the cytoplasm. The enzyme catalyses tRNA(Gln) + L-glutamine + ATP = L-glutaminyl-tRNA(Gln) + AMP + diphosphate. In Pseudomonas aeruginosa (strain ATCC 15692 / DSM 22644 / CIP 104116 / JCM 14847 / LMG 12228 / 1C / PRS 101 / PAO1), this protein is Glutamine--tRNA ligase.